Here is a 122-residue protein sequence, read N- to C-terminus: Large ribosomal subunit protein uL14 (122 aa).

The protein belongs to the universal ribosomal protein uL14 family. As to quaternary structure, part of the 50S ribosomal subunit. Forms a cluster with proteins L3 and L19. In the 70S ribosome, L14 and L19 interact and together make contacts with the 16S rRNA in bridges B5 and B8.

Binds to 23S rRNA. Forms part of two intersubunit bridges in the 70S ribosome. In Shewanella sediminis (strain HAW-EB3), this protein is Large ribosomal subunit protein uL14.